Consider the following 864-residue polypeptide: Leucine--tRNA ligase (864 aa).

Residues 42–52 (PYPSGKLHMGH) carry the 'HIGH' region motif. Positions 624–628 (KMSKS) match the 'KMSKS' region motif. Lys-627 contributes to the ATP binding site.

Belongs to the class-I aminoacyl-tRNA synthetase family.

It localises to the cytoplasm. It catalyses the reaction tRNA(Leu) + L-leucine + ATP = L-leucyl-tRNA(Leu) + AMP + diphosphate. This Burkholderia pseudomallei (strain 1710b) protein is Leucine--tRNA ligase.